Reading from the N-terminus, the 789-residue chain is Aryl hydrocarbon receptor nuclear translocator (789 aa).

The segment covering 1–14 (MAATTANPEMTSDV) has biased composition (polar residues). Residues 1–97 (MAATTANPEM…RLARENHSEI (97 aa)) are disordered. Ala2 bears the N-acetylalanine mark. Residues 26–35 (SGPGIQGGGA) are compositionally biased toward gly residues. A Glycyl lysine isopeptide (Lys-Gly) (interchain with G-Cter in SUMO2) cross-link involves residue Lys58. Over residues 60 to 97 (LRCDDDQMSNDKERFARSDDEQSSADKERLARENHSEI) the composition is skewed to basic and acidic residues. Position 77 is a phosphoserine (Ser77). The tract at residues 88-128 (RLARENHSEIERRRRNKMTAYITELSDMVPTCSALARKPDK) is DNA-binding. Positions 89 to 142 (LARENHSEIERRRRNKMTAYITELSDMVPTCSALARKPDKLTILRMAVSHMKSL) constitute a bHLH domain. Residues 112–168 (LSDMVPTCSALARKPDKLTILRMAVSHMKSLRGTGNTSTDGSYKPSFLTDQELKHLI) form a required for heterodimer formation with HIF1A region. The tract at residues 112–264 (LSDMVPTCSA…MCMGSRRSFI (153 aa)) is required for heterodimer formation with EPAS1. 2 consecutive PAS domains span residues 161–235 (DQEL…LTGR) and 349–419 (PNCT…VKLK). Positions 167–171 (LILEA) are mediates the transcription activity and dimerization of the AHR:ARNT complex. The region spanning 424–467 (SVMFRFRSKNQEWLWMRTSSFTFQNPYSDEIEYIICTNTNVKNS) is the PAC domain. Residues 465–481 (KNSSQEPRPTLSNTIQR) are compositionally biased toward polar residues. 2 disordered regions span residues 465 to 492 (KNSSQEPRPTLSNTIQRPQLGPTANLPL) and 672 to 789 (TPSS…PFSE). Residues 672 to 696 (TPSSFSSMSLPGAPTASPGAAAYPS) are compositionally biased toward low complexity. Polar residues predominate over residues 708–719 (TGQTAGQFQTRT). Composition is skewed to low complexity over residues 723-733 (VGVWPQWQGQQ) and 743-756 (QHVQQPPAQQPGQP).

As to quaternary structure, monomer. Homodimer only upon binding to a DNA. Efficient DNA binding requires dimerization with another bHLH protein. Interacts with TACC3. Interacts with HIF1A, EPAS1, NPAS1 and NPAS3; forms a heterodimer that binds core DNA sequence 5'-TACGTG-3' within the hypoxia response element (HRE) of target gene promoters. Forms a heterodimer with AHRR, as well as with other bHLH proteins. Interacts with NOCA7. Interacts with TACC3. Interacts with AHR; the heterodimer ARNT:AHR binds to core DNA sequence 5'-TGCGTG-3' within the dioxin response element (DRE) of target gene promoters and activates their transcription. Interacts with SIM1 and NPAS4.

It localises to the nucleus. Functionally, required for activity of the AHR. Upon ligand binding, AHR translocates into the nucleus, where it heterodimerizes with ARNT and induces transcription by binding to xenobiotic response elements (XRE). Not required for the ligand-binding subunit to translocate from the cytosol to the nucleus after ligand binding. The complex initiates transcription of genes involved in the regulation of a variety of biological processes, including angiogenesis, hematopoiesis, drug and lipid metabolism, cell motility and immune modulation. The heterodimer binds to core DNA sequence 5'-TACGTG-3' within the hypoxia response element (HRE) of target gene promoters and functions as a transcriptional regulator of the adaptive response to hypoxia. The heterodimer ARNT:AHR binds to core DNA sequence 5'-TGCGTG-3' within the dioxin response element (DRE) of target gene promoters and activates their transcription. This chain is Aryl hydrocarbon receptor nuclear translocator, found in Homo sapiens (Human).